The sequence spans 198 residues: MTKIIGITGGIASGKSTITNYLRQKGYQVIDADQVVHDLQANGGRLYQALVNWLGTAILNEAGELNRPKLSQLIFSSPDNLAKSSQLQNAIIRQELETRRDQLAKTEAIFFMDIPLLIEQNYRDWFDEIWLIAVSPETQIKRLKQRNGYSQEEAQQRLASQMPLQAKKVYADQIIDNNKTVENTKMQVDSQLRRLQNE.

The DPCK domain maps to Ile-4–Glu-198. An ATP-binding site is contributed by Ala-12 to Thr-17.

This sequence belongs to the CoaE family.

It localises to the cytoplasm. The catalysed reaction is 3'-dephospho-CoA + ATP = ADP + CoA + H(+). It participates in cofactor biosynthesis; coenzyme A biosynthesis; CoA from (R)-pantothenate: step 5/5. Its function is as follows. Catalyzes the phosphorylation of the 3'-hydroxyl group of dephosphocoenzyme A to form coenzyme A. This is Dephospho-CoA kinase from Streptococcus mutans serotype c (strain ATCC 700610 / UA159).